The following is a 1514-amino-acid chain: Polycomb group protein ASXL1 (1514 aa).

Positions 11-86 (RTWAEAARLV…RISLFTLKKD (76 aa)) constitute an HTH HARE-type domain. 2 disordered regions span residues 95-170 (ATVD…VMLP) and 183-249 (HVEP…RGEE). Positions 98 to 107 (DGDEPEDSAD) are enriched in acidic residues. A compositionally biased stretch (polar residues) spans 111–145 (CGSNEASTVSGENDVSLDETSSNASCSTESQSRPL). Residues 199-209 (SGSPSSSSSGS) show a composition bias toward low complexity. The interaction with nucleosomal DNA forming a DNA clamp with BAP1 stretch occupies residues 243–246 (KRNR). The DEUBAD domain occupies 255–364 (PGSILVNTNL…FEDYYGQKLG (110 aa)). Residues 284-288 (LLLLL) carry the LXXLL motif 1 motif. The tract at residues 300–655 (LLRLSGSALN…GGGSGAIDEG (356 aa)) is interaction with NCOA1. Positions 310–315 (NEFFTH) match the NEF motif motif. Residues 336-346 (RLRQEMEKEKK) are interaction with nucleosomal DNA. Disordered stretches follow at residues 378–543 (EEAK…EDRQ), 635–823 (TTAI…FDNM), 895–914 (SDPE…EKEW), 926–952 (SVPQ…SDSE), and 964–995 (ISEA…VDAS). The short motif at 408–415 (FKKRSRPD) is the Nuclear localization signal element. The segment covering 458–473 (VNSTPGPDVSSATSGQ) has biased composition (polar residues). Phosphoserine is present on residues Ser498 and Ser500. Basic and acidic residues-rich tracts occupy residues 514-525 (QETKDQKRKSFE) and 533-543 (PEKKPRLEDRQ). Over residues 638–654 (IGGGGGPGGGGSGAIDE) the composition is skewed to gly residues. Positions 678–692 (PSTSGESASDLQRTQ) are enriched in polar residues. 2 stretches are compositionally biased toward basic and acidic residues: residues 713-728 (ARRE…ESCL) and 779-793 (LLDD…REDQ). The short motif at 808–812 (LGDLL) is the LXXLL motif 2 element. Residues 971 to 980 (HSESTDTASD) are compositionally biased toward polar residues. The interval 1082–1087 (LVMHLL) is required for interaction with RARA. Disordered regions lie at residues 1095-1131 (KVLP…ENNR), 1213-1234 (EQKE…GQCL), and 1256-1338 (SEQT…VSAD). The span at 1119–1129 (DRGTLQGTGEN) shows a compositional bias: polar residues. 2 stretches are compositionally biased toward polar residues: residues 1256-1269 (SEQT…QNNA) and 1313-1324 (SKNSVSGGVQTT). Residues 1476 to 1513 (SLQCACSLKAMIMCQGCGAFCHDDCIGPSKLCVLCLVV) form a PHD-type; atypical zinc finger.

The protein belongs to the Asx family. Core component of the polycomb repressive deubiquitinase (PR-DUB) complex, at least composed of BAP1, one of ASXL1, ASXL2 or (probably) ASXL3, and one of MBD5 or MBD6. Distinct combinations of ASXL and MBD proteins may preferentially bind specific histone modification marks. The PR-DUB core associates with a number of accessory proteins, including FOXK1, FOXK2, KDM1B, HCFC1 and OGT; KDM1B specifically associates with ASXL2 PR-DUB complexes. Interacts (via DEUBAD domain) with BAP1 (via ULD domain); the interaction is direct and forms a ubiquitin binding cleft. The interaction with BAP1 is important for maintaining BAP1 stability. Together with BAP1, associates (via DEUBAD domain) with nucleosomes; interacts with nucleosomal DNA and stabilizes the orientation of the nucleosome to line up the PR-DUB complex active site with its H2AK118ub1 substrate. Interacts (via PHD domain) with MBD5 and MBD6 (via MBD domain); the interaction is probably direct and mediates association of MBD proteins with the PR-DUB core. Interacts with RARA, RXRA. Interacts with NCOA1. Interacts with PPARA and PPARG. Post-translationally, ubiquitinated by TRIP12, leading to its subsequent degradation following binding of N(6)-methyladenine methylated DNA (6mA).

The protein resides in the nucleus. Functionally, probable Polycomb group (PcG) protein involved in transcriptional regulation mediated by ligand-bound nuclear hormone receptors, such as retinoic acid receptors (RARs) and peroxisome proliferator-activated receptor gamma (PPARG). Acts as a coactivator of RARA and RXRA through association with NCOA1. Acts as a corepressor for PPARG and suppresses its adipocyte differentiation-inducing activity. Non-catalytic component of the PR-DUB complex, a complex that specifically mediates deubiquitination of histone H2A monoubiquitinated at 'Lys-119' (H2AK119ub1). Acts as a sensor of N(6)-methyladenine methylation on DNA (6mA): recognizes and binds 6mA DNA, leading to its ubiquitination and degradation by TRIP12, thereby inactivating the PR-DUB complex and regulating Polycomb silencing. The PR-DUB complex is an epigenetic regulator of gene expression and acts as a transcriptional coactivator, affecting genes involved in development, cell communication, signaling, cell proliferation and cell viability. ASXL1, ASXL2 and ASXL3 function redundantly in the PR-DUB complex. The ASXL proteins are essential for chromatin recruitment and transcriptional activation of associated genes. ASXL1 and ASXL2 are important for BAP1 protein stability. Together with BAP1, negatively regulates epithelial-mesenchymal transition (EMT) of trophoblast stem cells during placental development by regulating genes involved in epithelial cell integrity, cell adhesion and cytoskeletal organization. This chain is Polycomb group protein ASXL1 (Asxl1), found in Mus musculus (Mouse).